The sequence spans 273 residues: Giardin subunit beta (273 aa).

The segment at 1 to 19 (MSMFTSTRTLTQTMDKPDD) is nonhelical region. Residues 20–273 (LTRSATETAV…GGLSMVTKHQ (254 aa)) are rod. Coiled coils occupy residues 123–175 (DTLN…YDQL) and 211–263 (NTKL…SKIQ).

The protein belongs to the SF-assemblin family. Interacts with BOP1 (via C-terminal WD repeats).

It is found in the cytoplasm. The protein localises to the cytoskeleton. Its function is as follows. Giardins are involved in parasite attachment to the intestinal mucosa and in the cytoskeletal disassembly and reassembly that marks the transition from infectious trophozoite to transmissible cyst. They may interact with other cytoskeletal proteins such as microtubules in the microribbons or crossbridges, to maintain the integrity of the ventral disk. This Giardia intestinalis (Giardia lamblia) protein is Giardin subunit beta.